Consider the following 483-residue polypeptide: Probable glycine dehydrogenase (decarboxylating) subunit 2 (483 aa).

Residues Met1–Arg33 are disordered. N6-(pyridoxal phosphate)lysine is present on Lys264.

This sequence belongs to the GcvP family. C-terminal subunit subfamily. In terms of assembly, the glycine cleavage system is composed of four proteins: P, T, L and H. In this organism, the P 'protein' is a heterodimer of two subunits. It depends on pyridoxal 5'-phosphate as a cofactor.

The enzyme catalyses N(6)-[(R)-lipoyl]-L-lysyl-[glycine-cleavage complex H protein] + glycine + H(+) = N(6)-[(R)-S(8)-aminomethyldihydrolipoyl]-L-lysyl-[glycine-cleavage complex H protein] + CO2. Its function is as follows. The glycine cleavage system catalyzes the degradation of glycine. The P protein binds the alpha-amino group of glycine through its pyridoxal phosphate cofactor; CO(2) is released and the remaining methylamine moiety is then transferred to the lipoamide cofactor of the H protein. The sequence is that of Probable glycine dehydrogenase (decarboxylating) subunit 2 from Nitrosomonas europaea (strain ATCC 19718 / CIP 103999 / KCTC 2705 / NBRC 14298).